An 896-amino-acid polypeptide reads, in one-letter code: Alanine--tRNA ligase (896 aa).

Histidine 599, histidine 603, cysteine 707, and histidine 711 together coordinate Zn(2+).

The protein belongs to the class-II aminoacyl-tRNA synthetase family. Zn(2+) serves as cofactor.

It localises to the cytoplasm. The enzyme catalyses tRNA(Ala) + L-alanine + ATP = L-alanyl-tRNA(Ala) + AMP + diphosphate. Functionally, catalyzes the attachment of alanine to tRNA(Ala) in a two-step reaction: alanine is first activated by ATP to form Ala-AMP and then transferred to the acceptor end of tRNA(Ala). Also edits incorrectly charged Ser-tRNA(Ala) and Gly-tRNA(Ala) via its editing domain. This chain is Alanine--tRNA ligase, found in Pyrobaculum calidifontis (strain DSM 21063 / JCM 11548 / VA1).